Consider the following 354-residue polypeptide: Rhodopsin (354 aa).

Topologically, residues 1 to 36 are extracellular; sequence MNGTEGPNFYVPFSNKSGVVRSPFEYPQYYLAEPWQ. 2 N-linked (GlcNAc...) asparagine glycosylation sites follow: N2 and N15. Residues 37–61 form a helical membrane-spanning segment; sequence YSVLAAYMFLLILLGFPVNFLTLYV. Over 62–73 the chain is Cytoplasmic; the sequence is TIQHKKLRTPLN. Residues 74–96 traverse the membrane as a helical segment; the sequence is YILLNLAFANHFMVFGGFPVTMY. Residues 97–110 are Extracellular-facing; the sequence is SSMHGYFVFGQTGC. C110 and C187 are joined by a disulfide. Residues 111 to 133 form a helical membrane-spanning segment; it reads YIEGFFATMGGEIALWSLVVLAI. The short motif at 134–136 is the 'Ionic lock' involved in activated form stabilization element; sequence ERY. Residues 134-152 are Cytoplasmic-facing; that stretch reads ERYVVVCKPMSNFRFGENH. A helical membrane pass occupies residues 153–173; that stretch reads AIMGVMMTWIMALACAAPPLF. Residues 174–202 lie on the Extracellular side of the membrane; the sequence is GWSRYIPEGMQCSCGVDYYTLKPEVNNES. Residues 203–224 form a helical membrane-spanning segment; that stretch reads FVIYMFLVHFTIPLMIIFFCYG. Residues 225 to 252 lie on the Cytoplasmic side of the membrane; it reads RLVCTVKEAAAQQQESATTQKAEKEVTR. A helical transmembrane segment spans residues 253–274; the sequence is MVIIMVVAFLICWVPYASVAFY. Residues 275–286 lie on the Extracellular side of the membrane; that stretch reads IFSNQGTDFGPI. Residues 287 to 308 traverse the membrane as a helical segment; sequence FMTVPAFFAKSSAIYNPVIYIV. Position 296 is an N6-(retinylidene)lysine (K296). The Cytoplasmic segment spans residues 309–354; the sequence is LNKQFRNCMITTICCGKNPFGDDETTSAATSKTEASSVSSSQVSPA. 2 S-palmitoyl cysteine lipidation sites follow: C322 and C323. Positions 332–354 are disordered; that stretch reads ETTSAATSKTEASSVSSSQVSPA. Over residues 334-354 the composition is skewed to low complexity; the sequence is TSAATSKTEASSVSSSQVSPA.

It belongs to the G-protein coupled receptor 1 family. Opsin subfamily. Contains one covalently linked retinal chromophore. Upon light absorption, the covalently bound 11-cis-retinal is converted to all-trans-retinal. After hydrolysis of the Schiff base and release of the covalently bound all-trans-retinal, active rhodopsin is regenerated by binding of a fresh molecule of 11-cis-retinal.

Its subcellular location is the membrane. The protein resides in the cell projection. It localises to the cilium. The protein localises to the photoreceptor outer segment. Functionally, photoreceptor required for image-forming vision at low light intensity. Required for photoreceptor cell viability after birth. Light-induced isomerization of 11-cis to all-trans retinal triggers a conformational change that activates signaling via G-proteins. Subsequent receptor phosphorylation mediates displacement of the bound G-protein alpha subunit by arrestin and terminates signaling. This is Rhodopsin (RHO) from Ambystoma tigrinum (Eastern tiger salamander).